The chain runs to 106 residues: Protein translation factor SUI1 homolog (106 aa).

Belongs to the SUI1 family.

Additional factor that functions in concert with eIF-2 and the initiator tRNA in directing the ribosome to the proper start site of translation. The chain is Protein translation factor SUI1 homolog from Acanthamoeba polyphaga mimivirus (APMV).